Consider the following 131-residue polypeptide: Protein GLUTAMINE DUMPER 5 (131 aa).

Residues 1–34 (MRQFPSIRGNINEKMMTTMVESQTRSPWRTPVPY) are Extracellular-facing. The chain crosses the membrane as a helical span at residues 35–55 (LFGGLAAMLGLIAFALLLLAC). Residues 56 to 131 (SYWRLSRQTE…GESKVTEENH (76 aa)) are Cytoplasmic-facing. Residues 88 to 92 (VIMAG) carry the VIMAG motif.

It belongs to the GLUTAMINE DUMPER 1 (TC 9.B.60) family. Expressed in the vascular tissues. Also detected in guard cells.

The protein resides in the membrane. In terms of biological role, probable subunit of an amino acid transporter involved in the regulation of the amino acid metabolism. Stimulates amino acid export by activating nonselective amino acid facilitators. This Arabidopsis thaliana (Mouse-ear cress) protein is Protein GLUTAMINE DUMPER 5 (GDU5).